A 68-amino-acid polypeptide reads, in one-letter code: Protein transport protein Sec61 subunit gamma (68 aa).

Over 1 to 32 (MDQVMQFVEPSRQFVKDSIRLVKRCTKPDRKE) the chain is Cytoplasmic. A helical transmembrane segment spans residues 33 to 61 (FQKIAMATAIGFAIMGFIGFFVKLIHIPI). Residues 62-68 (NNIIVGS) lie on the Extracellular side of the membrane.

This sequence belongs to the SecE/SEC61-gamma family. The SEC61 channel-forming translocon complex consists of channel-forming core components SEC61A1, SEC61B and SEC61G and different auxiliary components such as SEC62 and SEC63. The SEC61 channel associates with the multi-pass translocon (MPT) complex.

Its subcellular location is the endoplasmic reticulum membrane. In terms of biological role, component of SEC61 channel-forming translocon complex that mediates transport of signal peptide-containing precursor polypeptides across the endoplasmic reticulum (ER). Forms a ribosome receptor and a gated pore in the ER membrane, both functions required for cotranslational translocation of nascent polypeptides. The SEC61 channel is also involved in ER membrane insertion of transmembrane proteins: it mediates membrane insertion of the first few transmembrane segments of proteins, while insertion of subsequent transmembrane regions of multi-pass membrane proteins is mediated by the multi-pass translocon (MPT) complex. This is Protein transport protein Sec61 subunit gamma (sec61g) from Xenopus laevis (African clawed frog).